The primary structure comprises 190 residues: Jupiter microtubule associated homolog 2 (190 aa).

Residue Met-1 is modified to N-acetylmethionine. Over residues 1–15 the composition is skewed to polar residues; the sequence is MFQGADSQAGKSGSR. The interval 1–190 is disordered; sequence MFQGADSQAG…PGGKSSLSFY (190 aa). Lys-11 is subject to N6-acetyllysine. The residue at position 30 (Ser-30) is a Phosphoserine. A compositionally biased stretch (polar residues) spans 35–44; that stretch reads ISSSKPNRMA. A phosphoserine mark is found at Ser-45, Ser-69, and Ser-97. Composition is skewed to basic and acidic residues over residues 110–129 and 138–153; these read KPKDHVLLCEGEDSKSDLKA and EQSDKGSSKEVEHAKI. Ser-144 is modified (phosphoserine).

The protein belongs to the JUPITER family. In terms of assembly, monomer. Dimer. Interacts with TPCN1.

Its subcellular location is the cytoplasm. It is found in the nucleus. Its function is as follows. Nicotinic acid adenine dinucleotide phosphate (NAADP) binding protein required for NAADP-evoked intracellular calcium release. Confers NAADP-sensitivity to the two pore channels (TPCs) complex. Enables NAADP to activate Ca(2+) release from the endoplasmic reticulum through ryanodine receptors. In Mus musculus (Mouse), this protein is Jupiter microtubule associated homolog 2.